Consider the following 281-residue polypeptide: Bidirectional sugar transporter SWEET14 (281 aa).

At 1-6 (MVLTHN) the chain is on the extracellular side. The chain crosses the membrane as a helical span at residues 7–27 (VLAVTFGVLGNIISFIVFLAP). In terms of domain architecture, MtN3/slv 1 spans 11–97 (TFGVLGNIIS…ILFITYANKK (87 aa)). The Cytoplasmic portion of the chain corresponds to 28–42 (VPTFVRICKKKSIEG). Residues 43–63 (FESLPYVSALFSAMLWIYYAL) traverse the membrane as a helical segment. The Extracellular portion of the chain corresponds to 64–70 (QKDGAGF). The chain crosses the membrane as a helical span at residues 71–91 (LLITINAVGCFIETIYIILFI). At 92 to 104 (TYANKKARISTLK) the chain is on the cytoplasmic side. Residues 105–125 (VLGLLNFLGFAAIILVCELLT) traverse the membrane as a helical segment. The Extracellular segment spans residues 126-132 (KGSNREK). The helical transmembrane segment at 133-153 (VLGGICVGFSVCVFAAPLSIM) threads the bilayer. Positions 133–216 (VLGGICVGFS…MILYVIFKYY (84 aa)) constitute a MtN3/slv 2 domain. Over 154 to 166 (RVVIRTKSVEFMP) the chain is Cytoplasmic. The chain crosses the membrane as a helical span at residues 167-187 (FSLSLFLTISAITWLFYGLAI). The Extracellular segment spans residues 188 to 192 (KDFYV). Residues 193-213 (ALPNILGAFLGAVQMILYVIF) traverse the membrane as a helical segment. Topologically, residues 214-281 (KYYKTPLVVD…EDQMDKKMPN (68 aa)) are cytoplasmic. Residues 244–259 (TPASGDLTVQPQTNPD) are compositionally biased toward polar residues. Positions 244–281 (TPASGDLTVQPQTNPDVSHPIKTHGGDLEDQMDKKMPN) are disordered. The segment covering 267-281 (HGGDLEDQMDKKMPN) has biased composition (basic and acidic residues).

This sequence belongs to the SWEET sugar transporter family. As to quaternary structure, forms homooligomers and/or heterooligomers.

It is found in the cell membrane. Functionally, mediates both low-affinity uptake and efflux of sugar across the plasma membrane. The polypeptide is Bidirectional sugar transporter SWEET14 (Arabidopsis thaliana (Mouse-ear cress)).